The chain runs to 535 residues: Bifunctional purine biosynthesis protein PurH (535 aa).

One can recognise an MGS-like domain in the interval 6–151 (TRLPVRRALI…KNHKDVAIVV (146 aa)).

This sequence belongs to the PurH family.

It carries out the reaction (6R)-10-formyltetrahydrofolate + 5-amino-1-(5-phospho-beta-D-ribosyl)imidazole-4-carboxamide = 5-formamido-1-(5-phospho-D-ribosyl)imidazole-4-carboxamide + (6S)-5,6,7,8-tetrahydrofolate. The enzyme catalyses IMP + H2O = 5-formamido-1-(5-phospho-D-ribosyl)imidazole-4-carboxamide. The protein operates within purine metabolism; IMP biosynthesis via de novo pathway; 5-formamido-1-(5-phospho-D-ribosyl)imidazole-4-carboxamide from 5-amino-1-(5-phospho-D-ribosyl)imidazole-4-carboxamide (10-formyl THF route): step 1/1. It participates in purine metabolism; IMP biosynthesis via de novo pathway; IMP from 5-formamido-1-(5-phospho-D-ribosyl)imidazole-4-carboxamide: step 1/1. The sequence is that of Bifunctional purine biosynthesis protein PurH from Pseudomonas putida (strain ATCC 700007 / DSM 6899 / JCM 31910 / BCRC 17059 / LMG 24140 / F1).